Consider the following 1081-residue polypeptide: SPX and EXS domain-containing protein 4 (1081 aa).

Positions 1-483 (MKFRDLLNDH…RIISSECRKY (483 aa)) constitute an SPX domain. Disordered regions lie at residues 86–118 (ETAD…SVGF), 160–271 (QRNN…HDKN), and 318–354 (VKGD…DEDN). Low complexity-rich tracts occupy residues 90 to 110 (SPAI…NNNN), 161 to 196 (RNNN…TRNI), and 211 to 228 (SPFS…SPSP). Positions 244 to 264 (KDEDEEEEGEEEEDIEMEQLE) are enriched in acidic residues. The span at 319-336 (KGDKSNDKNNDKSNDKNN) shows a compositional bias: basic and acidic residues. A compositionally biased stretch (low complexity) spans 337 to 349 (NKNNKNNNNNNNL). The next 9 helical transmembrane spans lie at 536 to 556 (NLFT…QVVF), 573 to 593 (LAWL…MFSL), 622 to 642 (YLKY…LYID), 654 to 674 (ILIP…PFPI), 703 to 723 (FFMS…QSMV), 776 to 796 (ITSA…YIAL), 803 to 823 (WSII…YKFY), 854 to 874 (WIYY…LIIF), and 887 to 907 (PLFL…FIFF). Positions 738–940 (FCSQSRFFAL…SQEYNNYMDE (203 aa)) constitute an EXS domain. The interval 939-1031 (DEKKKRRKRK…INDHMNPDTG (93 aa)) is disordered. The segment covering 942 to 951 (KKRRKRKQKQ) has biased composition (basic residues). The span at 952–970 (SKSNNNNNNNNNNNNNNNN) shows a compositional bias: low complexity. Residues 977-1003 (SSNNVETDETITSSNNTDSSHQKQPLT) show a composition bias toward polar residues. The segment covering 1013–1022 (NHQDHHDLSI) has biased composition (basic and acidic residues).

This sequence belongs to the SYG1 (TC 2.A.94) family.

It localises to the membrane. The protein is SPX and EXS domain-containing protein 4 of Dictyostelium discoideum (Social amoeba).